A 639-amino-acid polypeptide reads, in one-letter code: Extracellular metalloproteinase 9 (639 aa).

The first 19 residues, 1-19, serve as a signal peptide directing secretion; sequence MHGLLLAAGLLSLPLRALG. The propeptide occupies 20 to 250; the sequence is HPNPNPQMHT…IHGVVDYVAD (231 aa). N-linked (GlcNAc...) asparagine glycosylation is present at asparagine 278. Residues 293–312 form a disordered region; the sequence is PTTRGNNGIAQDNPSGGNQY. Residue histidine 434 coordinates Zn(2+). Glutamate 435 is an active-site residue. Residue histidine 438 participates in Zn(2+) binding.

The protein belongs to the peptidase M36 family. The cofactor is Zn(2+).

The protein resides in the secreted. Functionally, secreted metalloproteinase that allows assimilation of proteinaceous substrates and probably acts as a virulence factor. This is Extracellular metalloproteinase 9 (MEP9) from Coccidioides posadasii (strain C735) (Valley fever fungus).